A 126-amino-acid chain; its full sequence is MGPMGFVAVGVGAAVGAWLRWFFSVTWNAINPALPYGTLASNLVGGYLIGLAVAFFETHPSLPPEWRLLAVTGFLGGLTTFSTFSSEVIANLMAGDYRWAMLHLAMHLGGSLLLTAFGIWSYRALA.

The next 4 helical transmembrane spans lie at 5–25 (GFVAVGVGAAVGAWLRWFFSV), 36–56 (YGTLASNLVGGYLIGLAVAFF), 69–89 (LAVTGFLGGLTTFSTFSSEVI), and 99–119 (WAMLHLAMHLGGSLLLTAFGI). Na(+) is bound by residues glycine 76 and threonine 79.

The protein belongs to the fluoride channel Fluc/FEX (TC 1.A.43) family.

The protein resides in the cell inner membrane. The catalysed reaction is fluoride(in) = fluoride(out). Na(+) is not transported, but it plays an essential structural role and its presence is essential for fluoride channel function. In terms of biological role, fluoride-specific ion channel. Important for reducing fluoride concentration in the cell, thus reducing its toxicity. This chain is Fluoride-specific ion channel FluC, found in Cupriavidus metallidurans (strain ATCC 43123 / DSM 2839 / NBRC 102507 / CH34) (Ralstonia metallidurans).